A 405-amino-acid chain; its full sequence is Venom serine protease 34 (405 aa).

Residues 1 to 35 (MIFTNNIAAFQNVVLVKKVKIVLLIFYGSIMFSMT) form the signal peptide. 2 disulfides stabilise this stretch: cysteine 42–cysteine 70 and cysteine 95–cysteine 111. Residues 42–147 (CDYYQNLNLG…EVRPIKRVKD (106 aa)) form the CUB domain. A glycan (N-linked (GlcNAc...) asparagine) is linked at asparagine 113. The 237-residue stretch at 161-397 (IVGGTNTGIN…YIDWIVSQTP (237 aa)) folds into the Peptidase S1 domain. A disulfide bond links cysteine 188 and cysteine 204. Histidine 203 functions as the Charge relay system in the catalytic mechanism. 2 N-linked (GlcNAc...) asparagine glycosylation sites follow: asparagine 209 and asparagine 229. Aspartate 257 serves as the catalytic Charge relay system. Cystine bridges form between cysteine 323-cysteine 336 and cysteine 345-cysteine 375. Serine 349 (charge relay system) is an active-site residue.

This sequence belongs to the peptidase S1 family. In terms of tissue distribution, expressed by the venom duct.

The protein resides in the secreted. In Apis mellifera (Honeybee), this protein is Venom serine protease 34.